The following is an 82-amino-acid chain: Photosystem I iron-sulfur center (82 aa).

4Fe-4S ferredoxin-type domains are found at residues 2 to 31 (AHTV…MVPW) and 40 to 69 (IAAA…IRVY). [4Fe-4S] cluster contacts are provided by C11, C14, C17, C21, C49, C52, C55, and C59.

As to quaternary structure, the cyanobacterial PSI reaction center is composed of one copy each of PsaA,B,C,D,E,F,I,J,K,L,M and X, and forms trimeric complexes. It depends on [4Fe-4S] cluster as a cofactor.

The protein localises to the cellular thylakoid membrane. The catalysed reaction is reduced [plastocyanin] + hnu + oxidized [2Fe-2S]-[ferredoxin] = oxidized [plastocyanin] + reduced [2Fe-2S]-[ferredoxin]. In terms of biological role, apoprotein for the two 4Fe-4S centers FA and FB of photosystem I (PSI); essential for photochemical activity. FB is the terminal electron acceptor of PSI, donating electrons to ferredoxin. The C-terminus interacts with PsaA/B/D and helps assemble the protein into the PSI complex. Required for binding of PsaD and PsaE to PSI. PSI is a plastocyanin/cytochrome c6-ferredoxin oxidoreductase, converting photonic excitation into a charge separation, which transfers an electron from the donor P700 chlorophyll pair to the spectroscopically characterized acceptors A0, A1, FX, FA and FB in turn. The chain is Photosystem I iron-sulfur center from Synechococcus sp. (strain JA-3-3Ab) (Cyanobacteria bacterium Yellowstone A-Prime).